The primary structure comprises 1098 residues: Mediator of RNA polymerase II transcription subunit 5 (1098 aa).

The segment at 1019-1041 (PDDVQKSADMKPDTGIKEDDSEK) is disordered. The span at 1021-1041 (DVQKSADMKPDTGIKEDDSEK) shows a compositional bias: basic and acidic residues.

Belongs to the Mediator complex subunit 5 family. As to quaternary structure, component of the Mediator complex.

It localises to the nucleus. Component of the Mediator complex, a coactivator involved in the regulated transcription of nearly all RNA polymerase II-dependent genes. Mediator functions as a bridge to convey information from gene-specific regulatory proteins to the basal RNA polymerase II transcription machinery. Mediator is recruited to promoters by direct interactions with regulatory proteins and serves as a scaffold for the assembly of a functional preinitiation complex with RNA polymerase II and the general transcription factors. The polypeptide is Mediator of RNA polymerase II transcription subunit 5 (NUT1) (Eremothecium gossypii (strain ATCC 10895 / CBS 109.51 / FGSC 9923 / NRRL Y-1056) (Yeast)).